Reading from the N-terminus, the 315-residue chain is Methionyl-tRNA formyltransferase (315 aa).

(6S)-5,6,7,8-tetrahydrofolate is bound at residue 111 to 114 (SLLP).

It belongs to the Fmt family.

It catalyses the reaction L-methionyl-tRNA(fMet) + (6R)-10-formyltetrahydrofolate = N-formyl-L-methionyl-tRNA(fMet) + (6S)-5,6,7,8-tetrahydrofolate + H(+). Attaches a formyl group to the free amino group of methionyl-tRNA(fMet). The formyl group appears to play a dual role in the initiator identity of N-formylmethionyl-tRNA by promoting its recognition by IF2 and preventing the misappropriation of this tRNA by the elongation apparatus. The sequence is that of Methionyl-tRNA formyltransferase from Flavobacterium johnsoniae (strain ATCC 17061 / DSM 2064 / JCM 8514 / BCRC 14874 / CCUG 350202 / NBRC 14942 / NCIMB 11054 / UW101) (Cytophaga johnsonae).